Here is a 1033-residue protein sequence, read N- to C-terminus: Immunoglobulin superfamily member 2 (1033 aa).

Residues 1-20 (MACILCVASLFLSLTKFSIG) form the signal peptide. Topologically, residues 21–970 (QREVKIQEGP…VSSLICSSGP (950 aa)) are extracellular. Ig-like C2-type domains lie at 22 to 141 (REVK…TNLT), 144 to 266 (PDTL…TLIT), 279 to 388 (PAAR…TQMG), 408 to 529 (PAAR…QKIS), 539 to 657 (LRVN…ARVS), 670 to 797 (PESK…RKTS), and 806 to 941 (PTGS…KWIN). Cys43 and Cys121 are disulfide-bonded. Asn139 carries N-linked (GlcNAc...) asparagine glycosylation. Cys168 and Cys249 form a disulfide bridge. Positions 253–255 (EWI) match the EWI motif motif. 3 disulfides stabilise this stretch: Cys304–Cys377, Cys432–Cys509, and Cys560–Cys638. Asn677 is a glycosylation site (N-linked (GlcNAc...) asparagine). Cystine bridges form between Cys695/Cys776 and Cys832/Cys925. A helical transmembrane segment spans residues 971–991 (LLHFLIVCPFVMLLLLATSFL). The Cytoplasmic portion of the chain corresponds to 992–1033 (CLYRKARKLSQLSLSAKKEKALWVGMRKTSLQKEAGEESGHY).

N-glycosylated.

It localises to the membrane. Its function is as follows. Plays a role as inhibitor of T-cells proliferation induced by CD3. Inhibits expression of IL2RA on activated T-cells and secretion of IL2. Inhibits tyrosine kinases that are required for IL2 production and cellular proliferation. Inhibits phospholipase C-gamma-1/PLCG1 phosphorylation and subsequent CD3-induced changes in intracellular free calcium. Prevents nuclear translocation of nuclear factor of activated T-cell to the nucleus. Plays a role in the inhibition of T-cell proliferation via IL10 secretion by cutaneous dendritic cells. The protein is Immunoglobulin superfamily member 2 (Cd101) of Mus musculus (Mouse).